The chain runs to 378 residues: Protein SLG1 (378 aa).

The signal sequence occupies residues 1-21; the sequence is MRPNKTSLLLALLSILSQANA. The WSC domain occupies 22 to 110; sequence YEYVNCFSSL…EDAYSVYQLD (89 aa). Topologically, residues 22–264 are extracellular; that stretch reads YEYVNCFSSL…THKKKANVGA (243 aa). N-linked (GlcNAc...) asparagine glycosylation occurs at N65. Disordered regions lie at residues 115-201 and 236-256; these read SNSI…TSST and QNSG…SKTH. Residues 236–253 are compositionally biased toward low complexity; it reads QNSGSATGTAGSDSTSGS. A helical transmembrane segment spans residues 265–285; the sequence is IVGGVVGGVVGAVAIALCILL. At 286–378 the chain is on the cytoplasmic side; sequence IVRHINMKRE…LTVVNPDEAD (93 aa). Positions 318–378 are disordered; it reads ASSFSSNHGP…LTVVNPDEAD (61 aa). A compositionally biased stretch (low complexity) spans 319–331; it reads SSFSSNHGPSSGS. 2 positions are modified to phosphoserine: S331 and S353.

In terms of processing, glycosylated. Phosphorylated. Phosphorylation serves a negative regulatory role.

The protein localises to the cell membrane. Its function is as follows. Plays a role during G1 to regulate entering or exiting the cell cycle. Involved in stress responses. Has a role in cell wall integrity signaling. Activates ROM1 or ROM2 catalyzed guanine nucleotide exchange toward RHO1. Important regulator of the actin cytoskeleton rearrangements in conditions of cell wall expansion and membrane stretching. Specifically required for the actin reorganization induced by hypo-osmotic shock. Multicopy suppressor of 1,3-beta-glucan synthase (GS). Activates GS upstream of RHO1. Acts positively on the PKC1-MAPK pathway. Activates transiently SLT2 during alkaline stress, which leads to an increase in the expression of several specific genes. In Saccharomyces cerevisiae (strain ATCC 204508 / S288c) (Baker's yeast), this protein is Protein SLG1 (SLG1).